The sequence spans 53 residues: uncharacterized protein (53 aa).

Positions 1-19 (MKLLTILILFYSFFMNLQA) are cleaved as a signal peptide.

This is an uncharacterized protein from Autographa californica nuclear polyhedrosis virus (AcMNPV).